Consider the following 190-residue polypeptide: Probable molybdenum cofactor guanylyltransferase (190 aa).

GTP-binding positions include 9 to 11, Lys-21, Asp-65, and Asp-94; that span reads LCG. Asp-94 is a binding site for Mg(2+).

Belongs to the MobA family. It depends on Mg(2+) as a cofactor.

It localises to the cytoplasm. It catalyses the reaction Mo-molybdopterin + GTP + H(+) = Mo-molybdopterin guanine dinucleotide + diphosphate. In terms of biological role, transfers a GMP moiety from GTP to Mo-molybdopterin (Mo-MPT) cofactor (Moco or molybdenum cofactor) to form Mo-molybdopterin guanine dinucleotide (Mo-MGD) cofactor. This Flavobacterium johnsoniae (strain ATCC 17061 / DSM 2064 / JCM 8514 / BCRC 14874 / CCUG 350202 / NBRC 14942 / NCIMB 11054 / UW101) (Cytophaga johnsonae) protein is Probable molybdenum cofactor guanylyltransferase.